The primary structure comprises 152 residues: NAD(P)H-quinone oxidoreductase subunit N (152 aa).

It belongs to the complex I NdhN subunit family. In terms of assembly, NDH-1 can be composed of about 15 different subunits; different subcomplexes with different compositions have been identified which probably have different functions.

It localises to the cellular thylakoid membrane. The catalysed reaction is a plastoquinone + NADH + (n+1) H(+)(in) = a plastoquinol + NAD(+) + n H(+)(out). The enzyme catalyses a plastoquinone + NADPH + (n+1) H(+)(in) = a plastoquinol + NADP(+) + n H(+)(out). NDH-1 shuttles electrons from an unknown electron donor, via FMN and iron-sulfur (Fe-S) centers, to quinones in the respiratory and/or the photosynthetic chain. The immediate electron acceptor for the enzyme in this species is believed to be plastoquinone. Couples the redox reaction to proton translocation, and thus conserves the redox energy in a proton gradient. Cyanobacterial NDH-1 also plays a role in inorganic carbon-concentration. In Prochlorococcus marinus (strain SARG / CCMP1375 / SS120), this protein is NAD(P)H-quinone oxidoreductase subunit N.